A 144-amino-acid chain; its full sequence is Pleckstrin homology-like domain family A member 2 (144 aa).

The PH domain maps to 18–111 (ILCEGELEKR…AAITMALIDF (94 aa)). Position 140 is a phosphoserine (S140).

It belongs to the PHLDA2 family. As to expression, specifically expressed at high levels in extraembryonic tissues in the developing conceptus (at protein level). Expressed in placenta and yolc sac. Expressed at low levels in fetal liver and kidney.

It localises to the cytoplasm. Its subcellular location is the membrane. Plays a role in regulating placenta growth. May act via its PH domain that competes with other PH domain-containing proteins, thereby preventing their binding to membrane lipids. This is Pleckstrin homology-like domain family A member 2 (Phlda2) from Mus musculus (Mouse).